A 514-amino-acid polypeptide reads, in one-letter code: 3-octaprenyl-4-hydroxybenzoate carboxy-lyase (514 aa).

A Mn(2+)-binding site is contributed by N177. Residues 180-182, 194-196, and 199-200 each bind prenylated FMN; these read IYR, RWL, and RG. Position 243 (E243) interacts with Mn(2+). The Proton donor role is filled by D314.

This sequence belongs to the UbiD family. In terms of assembly, homohexamer. Prenylated FMN serves as cofactor. The cofactor is Mn(2+).

It localises to the cell membrane. It carries out the reaction a 4-hydroxy-3-(all-trans-polyprenyl)benzoate + H(+) = a 2-(all-trans-polyprenyl)phenol + CO2. It functions in the pathway cofactor biosynthesis; ubiquinone biosynthesis. Catalyzes the decarboxylation of 3-octaprenyl-4-hydroxy benzoate to 2-octaprenylphenol, an intermediate step in ubiquinone biosynthesis. This is 3-octaprenyl-4-hydroxybenzoate carboxy-lyase from Bordetella pertussis (strain Tohama I / ATCC BAA-589 / NCTC 13251).